The following is a 618-amino-acid chain: Chaperone protein HtpG (618 aa).

The interval 1–340 is a; substrate-binding; it reads MATKHQFQTE…SEDLPLNVSR (340 aa). A b region spans residues 341–545; sequence EILQQNKILA…KEDNNPMMAN (205 aa). Positions 546–618 are c; that stretch reads LMAQMGQKVP…ELNSLLLQSL (73 aa).

The protein belongs to the heat shock protein 90 family. Homodimer.

The protein localises to the cytoplasm. Molecular chaperone. Has ATPase activity. The polypeptide is Chaperone protein HtpG (Helicobacter hepaticus (strain ATCC 51449 / 3B1)).